Consider the following 428-residue polypeptide: Dihydroorotase (428 aa).

The Zn(2+) site is built by histidine 61 and histidine 63. Residues 63–65 and asparagine 95 contribute to the substrate site; that span reads HLR. Zn(2+) contacts are provided by aspartate 153, histidine 180, and histidine 233. Asparagine 279 lines the substrate pocket. Aspartate 306 lines the Zn(2+) pocket. Aspartate 306 is a catalytic residue. Substrate contacts are provided by residues histidine 310 and 324–325; that span reads FG.

It belongs to the metallo-dependent hydrolases superfamily. DHOase family. Class I DHOase subfamily. The cofactor is Zn(2+).

It catalyses the reaction (S)-dihydroorotate + H2O = N-carbamoyl-L-aspartate + H(+). It participates in pyrimidine metabolism; UMP biosynthesis via de novo pathway; (S)-dihydroorotate from bicarbonate: step 3/3. Its function is as follows. Catalyzes the reversible cyclization of carbamoyl aspartate to dihydroorotate. In Geobacillus kaustophilus (strain HTA426), this protein is Dihydroorotase.